Reading from the N-terminus, the 310-residue chain is Pantothenate kinase (310 aa).

95-102 (GSVAVGKS) provides a ligand contact to ATP.

The protein belongs to the prokaryotic pantothenate kinase family.

The protein localises to the cytoplasm. The catalysed reaction is (R)-pantothenate + ATP = (R)-4'-phosphopantothenate + ADP + H(+). It participates in cofactor biosynthesis; coenzyme A biosynthesis; CoA from (R)-pantothenate: step 1/5. The sequence is that of Pantothenate kinase from Rhodococcus opacus (strain B4).